Here is a 415-residue protein sequence, read N- to C-terminus: Esterase FrsA (415 aa).

The protein belongs to the FrsA family.

The catalysed reaction is a carboxylic ester + H2O = an alcohol + a carboxylate + H(+). Catalyzes the hydrolysis of esters. This is Esterase FrsA from Serratia proteamaculans (strain 568).